Reading from the N-terminus, the 203-residue chain is Probable GTP-binding protein EngB (203 aa).

In terms of domain architecture, EngB-type G spans 1 to 190 (MPEIVLVGRS…LEALQERVRK (190 aa)). Residues 8-15 (GRSNVGKS), 35-39 (GVTRK), 53-56 (DMPG), 132-135 (NKID), and 169-171 (ISA) each bind GTP. Mg(2+) contacts are provided by Ser-15 and Thr-37.

The protein belongs to the TRAFAC class TrmE-Era-EngA-EngB-Septin-like GTPase superfamily. EngB GTPase family. Mg(2+) is required as a cofactor.

In terms of biological role, necessary for normal cell division and for the maintenance of normal septation. In Methanopyrus kandleri (strain AV19 / DSM 6324 / JCM 9639 / NBRC 100938), this protein is Probable GTP-binding protein EngB.